The sequence spans 350 residues: Selenide, water dikinase (350 aa).

Sec-15 is an active-site residue. A non-standard amino acid (selenocysteine) is located at residue Sec-15. Residues Lys-18 and His-47–Glu-49 contribute to the ATP site. Residue Asp-50 participates in Mg(2+) binding. Residues Asp-67, Asp-90, and Gly-138 to Ser-140 each bind ATP. Mg(2+) is bound at residue Asp-90. Asp-227 provides a ligand contact to Mg(2+).

It belongs to the selenophosphate synthase 1 family. Class I subfamily. Homodimer. It depends on Mg(2+) as a cofactor.

It catalyses the reaction hydrogenselenide + ATP + H2O = selenophosphate + AMP + phosphate + 2 H(+). Its function is as follows. Synthesizes selenophosphate from selenide and ATP. The polypeptide is Selenide, water dikinase (Nitratidesulfovibrio vulgaris (strain DSM 19637 / Miyazaki F) (Desulfovibrio vulgaris)).